Consider the following 304-residue polypeptide: Nod factor export ATP-binding protein I (304 aa).

One can recognise an ABC transporter domain in the interval 6–236; the sequence is IDFQQVEKRY…EIGCDVIEIY (231 aa). 38–45 is an ATP binding site; sequence GPNGAGKT.

This sequence belongs to the ABC transporter superfamily. Lipooligosaccharide exporter (TC 3.A.1.102) family. The complex is composed of two ATP-binding proteins (NodI) and two transmembrane proteins (NodJ).

The protein resides in the cell inner membrane. Part of the ABC transporter complex NodIJ involved in the export of the nodulation factors (Nod factors), the bacterial signal molecules that induce symbiosis and subsequent nodulation induction. Nod factors are LCO (lipo-chitin oligosaccharide), a modified beta-1,4-linked N-acetylglucosamine oligosaccharide. This subunit is responsible for energy coupling to the transport system. This chain is Nod factor export ATP-binding protein I, found in Burkholderia pseudomallei (strain 1710b).